Consider the following 283-residue polypeptide: Formamidopyrimidine-DNA glycosylase (283 aa).

Pro2 (schiff-base intermediate with DNA) is an active-site residue. The active-site Proton donor is the Glu3. Residue Lys58 is the Proton donor; for beta-elimination activity of the active site. DNA is bound by residues His100, Arg119, and Arg162. The FPG-type zinc finger occupies 247–283; the sequence is RVYGREGLPCVTPGCSGTVGRIVQSGRSSFHCPLCQR. Arg273 serves as the catalytic Proton donor; for delta-elimination activity.

The protein belongs to the FPG family. As to quaternary structure, monomer. Zn(2+) serves as cofactor.

The enzyme catalyses Hydrolysis of DNA containing ring-opened 7-methylguanine residues, releasing 2,6-diamino-4-hydroxy-5-(N-methyl)formamidopyrimidine.. It carries out the reaction 2'-deoxyribonucleotide-(2'-deoxyribose 5'-phosphate)-2'-deoxyribonucleotide-DNA = a 3'-end 2'-deoxyribonucleotide-(2,3-dehydro-2,3-deoxyribose 5'-phosphate)-DNA + a 5'-end 5'-phospho-2'-deoxyribonucleoside-DNA + H(+). Functionally, involved in base excision repair of DNA damaged by oxidation or by mutagenic agents. Acts as a DNA glycosylase that recognizes and removes damaged bases. Has a preference for oxidized purines, such as 7,8-dihydro-8-oxoguanine (8-oxoG). Has AP (apurinic/apyrimidinic) lyase activity and introduces nicks in the DNA strand. Cleaves the DNA backbone by beta-delta elimination to generate a single-strand break at the site of the removed base with both 3'- and 5'-phosphates. The chain is Formamidopyrimidine-DNA glycosylase from Cereibacter sphaeroides (strain ATCC 17029 / ATH 2.4.9) (Rhodobacter sphaeroides).